Reading from the N-terminus, the 393-residue chain is Dwarfin sma-3 (393 aa).

Residues 10-139 (PAVKKLLGWK…YQRLSRPQGL (130 aa)) form the MH1 domain. Zn(2+) contacts are provided by Cys65, Cys110, Cys124, and His129. Positions 136–190 (PQGLNSSMPSPQPISSPNTIWQSSGSSTASCASSPSPSVFSEDGGEVQVHQRPPP) are disordered. Low complexity predominate over residues 141-176 (SSMPSPQPISSPNTIWQSSGSSTASCASSPSPSVFS). In terms of domain architecture, MH2 spans 197 to 393 (WAQITYFELN…TNLMEPNSMT (197 aa)).

This sequence belongs to the dwarfin/SMAD family.

The protein localises to the cytoplasm. Its subcellular location is the nucleus. Involved in TGF-beta pathway. Plays a role in male tail tip morphogenesis. The sequence is that of Dwarfin sma-3 from Caenorhabditis elegans.